Reading from the N-terminus, the 508-residue chain is Photosystem II CP47 reaction center protein (508 aa).

The next 6 membrane-spanning stretches (helical) occupy residues 21 to 36 (SVHI…WAGS), 101 to 115 (IVFS…IWHW), 140 to 156 (GIHL…FGAF), 203 to 218 (IAAG…FHLS), 237 to 252 (VLSS…AFVV), and 457 to 472 (SFAL…HGAR).

This sequence belongs to the PsbB/PsbC family. PsbB subfamily. PSII is composed of 1 copy each of membrane proteins PsbA, PsbB, PsbC, PsbD, PsbE, PsbF, PsbH, PsbI, PsbJ, PsbK, PsbL, PsbM, PsbT, PsbX, PsbY, PsbZ, Psb30/Ycf12, at least 3 peripheral proteins of the oxygen-evolving complex and a large number of cofactors. It forms dimeric complexes. Binds multiple chlorophylls. PSII binds additional chlorophylls, carotenoids and specific lipids. serves as cofactor.

The protein resides in the plastid. It is found in the chloroplast thylakoid membrane. One of the components of the core complex of photosystem II (PSII). It binds chlorophyll and helps catalyze the primary light-induced photochemical processes of PSII. PSII is a light-driven water:plastoquinone oxidoreductase, using light energy to abstract electrons from H(2)O, generating O(2) and a proton gradient subsequently used for ATP formation. The sequence is that of Photosystem II CP47 reaction center protein from Ipomoea purpurea (Common morning glory).